Consider the following 666-residue polypeptide: UvrABC system protein B (666 aa).

Positions Asn-28–Phe-171 constitute a Helicase ATP-binding domain. Residue Gly-41–Thr-48 participates in ATP binding. Residues Tyr-94–Thr-117 carry the Beta-hairpin motif. The region spanning Gln-436–Ile-598 is the Helicase C-terminal domain. In terms of domain architecture, UVR spans Asn-624 to Ile-659.

It belongs to the UvrB family. In terms of assembly, forms a heterotetramer with UvrA during the search for lesions. Interacts with UvrC in an incision complex.

The protein localises to the cytoplasm. Its function is as follows. The UvrABC repair system catalyzes the recognition and processing of DNA lesions. A damage recognition complex composed of 2 UvrA and 2 UvrB subunits scans DNA for abnormalities. Upon binding of the UvrA(2)B(2) complex to a putative damaged site, the DNA wraps around one UvrB monomer. DNA wrap is dependent on ATP binding by UvrB and probably causes local melting of the DNA helix, facilitating insertion of UvrB beta-hairpin between the DNA strands. Then UvrB probes one DNA strand for the presence of a lesion. If a lesion is found the UvrA subunits dissociate and the UvrB-DNA preincision complex is formed. This complex is subsequently bound by UvrC and the second UvrB is released. If no lesion is found, the DNA wraps around the other UvrB subunit that will check the other stand for damage. The protein is UvrABC system protein B of Ureaplasma parvum serovar 3 (strain ATCC 27815 / 27 / NCTC 11736).